A 189-amino-acid polypeptide reads, in one-letter code: Phosphoheptose isomerase (189 aa).

Residues 34–189 (LADSLAGGRK…CDLVEKRLFP (156 aa)) form the SIS domain. 49-51 (NGG) contributes to the substrate binding site. His-58 and Glu-62 together coordinate Zn(2+). Substrate-binding positions include Glu-62, 91 to 92 (ND), 117 to 119 (STS), Ser-122, and Gln-169. The Zn(2+) site is built by Gln-169 and His-177.

Belongs to the SIS family. GmhA subfamily. As to quaternary structure, homotetramer. Zn(2+) is required as a cofactor.

Its subcellular location is the cytoplasm. It carries out the reaction 2 D-sedoheptulose 7-phosphate = D-glycero-alpha-D-manno-heptose 7-phosphate + D-glycero-beta-D-manno-heptose 7-phosphate. Its pathway is carbohydrate biosynthesis; D-glycero-D-manno-heptose 7-phosphate biosynthesis; D-glycero-alpha-D-manno-heptose 7-phosphate and D-glycero-beta-D-manno-heptose 7-phosphate from sedoheptulose 7-phosphate: step 1/1. Catalyzes the isomerization of sedoheptulose 7-phosphate in D-glycero-D-manno-heptose 7-phosphate. The protein is Phosphoheptose isomerase of Geobacter sulfurreducens (strain ATCC 51573 / DSM 12127 / PCA).